A 599-amino-acid polypeptide reads, in one-letter code: Omega-hydroxyceramide transacylase (599 aa).

The PNPLA domain occupies 16–185 (ISFSGSGFLS…TSMQPCSFWT (170 aa)). The GXSXG motif lies at 51-55 (GTSAG). Catalysis depends on Ser-53, which acts as the Nucleophile. Asp-172 functions as the Proton acceptor in the catalytic mechanism. The DGA/G motif lies at 172–174 (DGG). The segment at 289–563 (PPPPSLQNLP…PASKLKSAPC (275 aa)) is disordered. 2 stretches are compositionally biased toward polar residues: residues 325 to 335 (SSAAPSVQTPE) and 350 to 362 (VSIS…SPLS). Residues 443–454 (SPESPRLLLRSS) are compositionally biased toward low complexity. Residues 468–478 (PLSPSTPPAGP) are compositionally biased toward pro residues. Polar residues predominate over residues 490–501 (ATGSPALSQLTG). Over residues 551–563 (SKKPASKLKSAPC) the composition is skewed to low complexity.

Specifically expressed in skin by keratinocytes, at the boundary area between the nucleated stratum granulosum and the denucleated stratum corneum in the epidermis (at protein level). Also expressed in stomach and other surface lining tissues like intestine and tongue. Also detected in testis as well as in other tissues but at very low level.

The protein resides in the cytoplasm. It catalyses the reaction an N-(omega-hydroxy-ultra-long chain fatty acyl)-sphingoid base + a (9Z,12Z)-octadecadienoyl-containing triacyl-sn-glycerol = an N-[omega-(9Z,12Z-octadecadienoyloxy)-O-ultra-long chain fatty acyl]-sphingoid base + a diacylglycerol. It carries out the reaction an N-(omega-hydroxy-ultra-long chain fatty acyl)-sphing-4-enine + a (9Z,12Z)-octadecadienoyl-containing triacyl-sn-glycerol = an N-(omega-(9Z,12Z-octadecadienoyloxy)-ultra-long chain fatty acyl)-sphing-4-enine + a diacylglycerol. The enzyme catalyses N-(28-hydroxyoctacosanoyl)-sphing-4-enine + a (9Z,12Z)-octadecadienoyl-containing triacyl-sn-glycerol = N-(28-(9Z,12Z-octadecadienoyloxy)-octacosanoyl)-sphing-4-enine + a diacylglycerol. The catalysed reaction is N-(30-hydroxytriacontanoyl)-sphing-4-enine + 1,2,3-tri-(9Z,12Z)-octadecadienoylglycerol = N-[30-(9Z,12Z-octadecadienoyloxy)-triacontanoyl]-sphing-4-enine + di-(9Z,12Z)-octadecadienoylglycerol. It catalyses the reaction N-(32-hydroxydotriacontanoyl)-sphing-4-enine + a (9Z,12Z)-octadecadienoyl-containing triacyl-sn-glycerol = N-(32-(9Z,12Z-octadecadienoyloxy)-dotricontanoyl)-sphing-4-enine + a diacylglycerol. It carries out the reaction N-(32-hydroxydotriacontenoyl)-sphing-4-enine + a (9Z,12Z)-octadecadienoyl-containing triacyl-sn-glycerol = an N-(32-(9Z,12Z-octadecadienoyloxy)-dotriacontenoyl)-sphing-4-enine + a diacylglycerol. The enzyme catalyses an N-(34-hydroxytetratriacontenoyl)-sphing-4-enine + a (9Z,12Z)-octadecadienoyl-containing triacyl-sn-glycerol = an N-(34-(9Z,12Z-octadecadienoyloxy)-tetratriacontenoyl)-sphing-4-enine + a diacylglycerol. The catalysed reaction is an N-(34-hydroxytetratriacontadienoyl)-sphing-4-enine + a (9Z,12Z)-octadecadienoyl-containing triacyl-sn-glycerol = an N-(34-(9Z,12Z-octadecadienoyloxy)-tetratriacontadienoyl)-sphing-4-enine + a diacylglycerol. It catalyses the reaction an N-(36-hydroxyhexatriacontenoyl)-sphing-4-enine + a (9Z,12Z)-octadecadienoyl-containing triacyl-sn-glycerol = an N-(36-(9Z,12Z-octadecadienoyloxy)-hexatriacontenoyl)-sphing-4-enine + a diacylglycerol. It carries out the reaction an N-(36-hydroxyhexatriacontadienoyl)-sphing-4-enine + a (9Z,12Z)-octadecadienoyl-containing triacyl-sn-glycerol = an N-(36-(9Z,12Z-octadecadienoyloxy)-hexatriacontadienoyl)-sphing-4-enine + a diacylglycerol. The enzyme catalyses an N-(38-hydroxyoctatriacontenoyl)-sphing-4-enine + a (9Z,12Z)-octadecadienoyl-containing triacyl-sn-glycerol = an N-(38-(9Z,12Z-octadecadienoyloxy)-octatriacontenoyl)-sphing-4-enine + a diacylglycerol. Omega-hydroxyceramide transacylase involved in the synthesis of omega-O-acylceramides (esterified omega-hydroxyacyl-sphingosine; EOS), which are extremely hydrophobic lipids involved in skin barrier formation. Catalyzes the last step of the synthesis of omega-O-acylceramides by transferring linoleic acid from triglycerides to an omega-hydroxyceramide. Omega-O-acylceramides, are required for the biogenesis of lipid lamellae in the stratum corneum and the formation of the cornified lipid envelope which are essential for the epidermis barrier function. These lipids also play a role in keratinocyte differentiation. May also act on omega-hydroxylated ultra-long chain fatty acids (omega-OH ULCFA) and acylglucosylceramides (GlcEOS). This chain is Omega-hydroxyceramide transacylase, found in Mus musculus (Mouse).